A 112-amino-acid polypeptide reads, in one-letter code: Small ribosomal subunit protein eS24 (112 aa).

The segment at 88–112 is disordered; sequence RGMAGEEEGNADAQDAPSGDAAEAS.

This sequence belongs to the eukaryotic ribosomal protein eS24 family.

The polypeptide is Small ribosomal subunit protein eS24 (Methanospirillum hungatei JF-1 (strain ATCC 27890 / DSM 864 / NBRC 100397 / JF-1)).